We begin with the raw amino-acid sequence, 556 residues long: Protein trichome birefringence-like 1 (556 aa).

A helical; Signal-anchor for type II membrane protein transmembrane segment spans residues 38–58 (TFVYAFVVTFVALTVFLAFSP). The short motif at 269 to 271 (GDS) is the GDS motif element. The DCXHWCLPGXXDXWN motif motif lies at 514–528 (DCSHWCLPGVPDSWN).

It belongs to the PC-esterase family. TBL subfamily. As to expression, not expressed in trichomes.

The protein localises to the membrane. Can complement TBR and is therefore functionally equivalent, but may work in different tissue. May act as a bridging protein that binds pectin and other cell wall polysaccharides. Probably involved in maintaining esterification of pectins. May be involved in the specific O-acetylation of cell wall polymers. In Arabidopsis thaliana (Mouse-ear cress), this protein is Protein trichome birefringence-like 1 (TBL1).